A 275-amino-acid polypeptide reads, in one-letter code: Phosphate import ATP-binding protein PstB (275 aa).

An ABC transporter domain is found at 29–270 (LEIKDLDLYY…PNKKKTEDYI (242 aa)). Position 61 to 68 (61 to 68 (GPSGCGKS)) interacts with ATP.

The protein belongs to the ABC transporter superfamily. Phosphate importer (TC 3.A.1.7) family. The complex is composed of two ATP-binding proteins (PstB), two transmembrane proteins (PstC and PstA) and a solute-binding protein (PstS).

It localises to the cell inner membrane. The enzyme catalyses phosphate(out) + ATP + H2O = ADP + 2 phosphate(in) + H(+). Its function is as follows. Part of the ABC transporter complex PstSACB involved in phosphate import. Responsible for energy coupling to the transport system. The polypeptide is Phosphate import ATP-binding protein PstB (Pseudoalteromonas translucida (strain TAC 125)).